We begin with the raw amino-acid sequence, 437 residues long: Adenylosuccinate synthetase (437 aa).

Residues 13–19 (GDEGKGK) and 41–43 (GHT) contribute to the GTP site. Asp-14 (proton acceptor) is an active-site residue. Mg(2+) contacts are provided by Asp-14 and Gly-41. Residues 14 to 17 (DEGK), 39 to 42 (NAGH), Thr-130, Arg-144, Gln-225, Thr-240, and Arg-310 contribute to the IMP site. The active-site Proton donor is the His-42. 306–312 (ATTGRLR) is a substrate binding site. GTP-binding positions include Arg-312, 338–340 (KLD), and 421–423 (STG).

The protein belongs to the adenylosuccinate synthetase family. In terms of assembly, homodimer. Requires Mg(2+) as cofactor.

Its subcellular location is the cytoplasm. The catalysed reaction is IMP + L-aspartate + GTP = N(6)-(1,2-dicarboxyethyl)-AMP + GDP + phosphate + 2 H(+). It participates in purine metabolism; AMP biosynthesis via de novo pathway; AMP from IMP: step 1/2. Its function is as follows. Plays an important role in the de novo pathway of purine nucleotide biosynthesis. Catalyzes the first committed step in the biosynthesis of AMP from IMP. The sequence is that of Adenylosuccinate synthetase from Psychromonas ingrahamii (strain DSM 17664 / CCUG 51855 / 37).